We begin with the raw amino-acid sequence, 753 residues long: Nigerose phosphorylase (753 aa).

A substrate-binding site is contributed by 348-349 (WD). The active-site Proton donor is the E490. 604 to 605 (KQ) is a substrate binding site.

Belongs to the glycosyl hydrolase 65 family. Homodimer.

The protein localises to the cytoplasm. It catalyses the reaction nigerose + phosphate = beta-D-glucose 1-phosphate + D-glucose. Its activity is regulated as follows. Does not require divalent metal ions. In terms of biological role, catalyzes the reversible phosphorolysis of nigerose. Also shows a weak activity on kojibiose. This chain is Nigerose phosphorylase, found in Lachnoclostridium phytofermentans (strain ATCC 700394 / DSM 18823 / ISDg) (Clostridium phytofermentans).